The chain runs to 157 residues: Small ribosomal subunit protein uS7 (157 aa).

The protein belongs to the universal ribosomal protein uS7 family. In terms of assembly, part of the 30S ribosomal subunit. Contacts proteins S9 and S11.

One of the primary rRNA binding proteins, it binds directly to 16S rRNA where it nucleates assembly of the head domain of the 30S subunit. Is located at the subunit interface close to the decoding center, probably blocks exit of the E-site tRNA. This is Small ribosomal subunit protein uS7 from Leptospira biflexa serovar Patoc (strain Patoc 1 / Ames).